Reading from the N-terminus, the 456-residue chain is tRNA modification GTPase MnmE (456 aa).

3 residues coordinate (6S)-5-formyl-5,6,7,8-tetrahydrofolate: R23, E85, and R124. The 156-residue stretch at 220–375 folds into the TrmE-type G domain; it reads GLRVLIFGKP…LVSAIQERFV (156 aa). A K(+)-binding site is contributed by N230. GTP is bound by residues 230–235, 249–255, and 274–277; these read NVGKSS, TDIPGTT, and DTAG. S234 contributes to the Mg(2+) binding site. T249, I251, and T254 together coordinate K(+). T255 lines the Mg(2+) pocket. Residue K456 coordinates (6S)-5-formyl-5,6,7,8-tetrahydrofolate.

It belongs to the TRAFAC class TrmE-Era-EngA-EngB-Septin-like GTPase superfamily. TrmE GTPase family. As to quaternary structure, homodimer. Heterotetramer of two MnmE and two MnmG subunits. It depends on K(+) as a cofactor.

The protein resides in the cytoplasm. Exhibits a very high intrinsic GTPase hydrolysis rate. Involved in the addition of a carboxymethylaminomethyl (cmnm) group at the wobble position (U34) of certain tRNAs, forming tRNA-cmnm(5)s(2)U34. This is tRNA modification GTPase MnmE from Syntrophotalea carbinolica (strain DSM 2380 / NBRC 103641 / GraBd1) (Pelobacter carbinolicus).